Reading from the N-terminus, the 136-residue chain is Histone H3-7 (136 aa).

Residues Met1 to Arg43 form a disordered region. Arg3 carries the asymmetric dimethylarginine modification. A Citrulline; alternate modification is found at Arg3. Residue Thr4 is modified to Phosphothreonine. Lys5 is modified (allysine; alternate). Lys5 is modified (N6,N6,N6-trimethyllysine; alternate). Lys5 carries the N6,N6-dimethyllysine; alternate modification. Lys5 is subject to N6-(2-hydroxyisobutyryl)lysine; alternate. Lys5 carries the post-translational modification N6-(beta-hydroxybutyryl)lysine; alternate. Lys5 is subject to N6-acetyllysine; alternate. Lys5 is subject to N6-methyllysine; alternate. Gln6 carries the 5-glutamyl dopamine; alternate modification. A 5-glutamyl serotonin; alternate modification is found at Gln6. Position 7 is a phosphothreonine (Thr7). Arg9 is modified (citrulline; alternate). Arg9 carries the symmetric dimethylarginine modification. Lys10 carries the N6,N6,N6-trimethyllysine; alternate modification. At Lys10 the chain carries N6,N6-dimethyllysine; alternate. Lys10 bears the N6-(2-hydroxyisobutyryl)lysine; alternate mark. Residue Lys10 is modified to N6-(beta-hydroxybutyryl)lysine; alternate. Lys10 is modified (N6-acetyllysine; alternate). Residue Lys10 is modified to N6-methyllysine; alternate. Position 10 is an N6-lactoyllysine; alternate (Lys10). Ser11 carries the post-translational modification ADP-ribosylserine; alternate. At Ser11 the chain carries Phosphoserine; alternate. Residue Thr12 is modified to Phosphothreonine. The residue at position 15 (Lys15) is an N6-(2-hydroxyisobutyryl)lysine; alternate. Position 15 is an N6-(beta-hydroxybutyryl)lysine; alternate (Lys15). Lys15 is modified (N6-acetyllysine; alternate). Lys15 carries the post-translational modification N6-lactoyllysine; alternate. N6-glutaryllysine; alternate is present on Lys15. An N6-succinyllysine; alternate modification is found at Lys15. Residue Arg18 is modified to Asymmetric dimethylarginine. Residue Arg18 is modified to Citrulline; alternate. An N6-(2-hydroxyisobutyryl)lysine; alternate mark is found at Lys19 and Lys24. N6-(beta-hydroxybutyryl)lysine; alternate is present on residues Lys19 and Lys24. N6-acetyllysine; alternate is present on residues Lys19 and Lys24. Lys19 and Lys24 each carry N6-methyllysine; alternate. Lys19 and Lys24 each carry N6-lactoyllysine; alternate. 2 positions are modified to N6-glutaryllysine; alternate: Lys19 and Lys24. 2 positions are modified to N6-butyryllysine; alternate: Lys19 and Lys24. Arg27 is subject to Citrulline. The residue at position 28 (Lys28) is an N6,N6,N6-trimethyllysine; alternate. At Lys28 the chain carries N6,N6-dimethyllysine; alternate. Residue Lys28 is modified to N6-(2-hydroxyisobutyryl)lysine; alternate. At Lys28 the chain carries N6-acetyllysine; alternate. Lys28 carries the post-translational modification N6-methyllysine; alternate. The residue at position 28 (Lys28) is an N6-lactoyllysine; alternate. Lys28 bears the N6-glutaryllysine; alternate mark. An ADP-ribosylserine; alternate modification is found at Ser29. Residue Ser29 is modified to Phosphoserine; alternate. The residue at position 37 (Lys37) is an N6,N6,N6-trimethyllysine; alternate. The residue at position 37 (Lys37) is an N6,N6-dimethyllysine; alternate. Lys37 is subject to N6-(2-hydroxyisobutyryl)lysine; alternate. Position 37 is an N6-acetyllysine; alternate (Lys37). Lys37 carries the N6-methyllysine; alternate modification. Lys38 carries the post-translational modification N6-methyllysine. Tyr42 is modified (phosphotyrosine). Lys57 carries the post-translational modification N6,N6,N6-trimethyllysine; alternate. Lys57 carries the post-translational modification N6-(2-hydroxyisobutyryl)lysine; alternate. At Lys57 the chain carries N6-(beta-hydroxybutyryl)lysine; alternate. Residue Lys57 is modified to N6-acetyllysine; alternate. Position 57 is an N6-lactoyllysine; alternate (Lys57). The residue at position 57 (Lys57) is an N6-glutaryllysine; alternate. Lys57 carries the N6-succinyllysine; alternate modification. The residue at position 57 (Lys57) is an N6-methyllysine. Ser58 is modified (phosphoserine). Residues Lys65 and Lys80 each carry the N6-(2-hydroxyisobutyryl)lysine; alternate modification. An N6-methyllysine; alternate mark is found at Lys65 and Lys80. The residue at position 80 (Lys80) is an N6,N6,N6-trimethyllysine; alternate. N6,N6-dimethyllysine; alternate is present on Lys80. Lys80 carries the N6-acetyllysine; alternate modification. N6-lactoyllysine; alternate is present on Lys80. Lys80 is modified (N6-glutaryllysine; alternate). The residue at position 80 (Lys80) is an N6-succinyllysine; alternate. Thr81 is subject to Phosphothreonine. Phosphoserine is present on Ser87. Residue Thr108 is modified to Phosphothreonine. N6-acetyllysine; alternate is present on residues Lys116 and Lys123. Lys116 and Lys123 each carry N6-glutaryllysine; alternate. Position 123 is an N6-(2-hydroxyisobutyryl)lysine; alternate (Lys123). Lys123 bears the N6-methyllysine; alternate mark. Lys123 is subject to N6-succinyllysine; alternate.

Belongs to the histone H3 family. The nucleosome is a histone octamer containing two molecules each of H2A, H2B, H3 and H4 assembled in one H3-H4 heterotetramer and two H2A-H2B heterodimers. The octamer wraps approximately 147 bp of DNA. During nucleosome assembly the chaperone ASF1A interacts with the histone H3-H4 heterodimer. Post-translationally, acetylation is generally linked to gene activation. Acetylation on Lys-10 (H3K9ac) impairs methylation at Arg-9 (H3R8me2s). Acetylation on Lys-19 (H3K18ac) and Lys-24 (H3K24ac) favors methylation at Arg-18 (H3R17me). Acetylation at Lys-123 (H3K122ac) by EP300/p300 plays a central role in chromatin structure: localizes at the surface of the histone octamer and stimulates transcription, possibly by promoting nucleosome instability. Citrullination at Arg-9 (H3R8ci) and/or Arg-18 (H3R17ci) by PADI4 impairs methylation and represses transcription. In terms of processing, asymmetric dimethylation at Arg-18 (H3R17me2a) by CARM1 is linked to gene activation. Symmetric dimethylation at Arg-9 (H3R8me2s) by PRMT5 is linked to gene repression. Asymmetric dimethylation at Arg-3 (H3R2me2a) by PRMT6 is linked to gene repression and is mutually exclusive with H3 Lys-5 methylation (H3K4me2 and H3K4me3). H3R2me2a is present at the 3' of genes regardless of their transcription state and is enriched on inactive promoters, while it is absent on active promoters. Post-translationally, methylation at Lys-5 (H3K4me), Lys-37 (H3K36me) and Lys-80 (H3K79me) are linked to gene activation. Methylation at Lys-5 (H3K4me) facilitates subsequent acetylation of H3 and H4. Methylation at Lys-80 (H3K79me) is associated with DNA double-strand break (DSB) responses and is a specific target for TP53BP1. Methylation at Lys-10 (H3K9me) and Lys-28 (H3K27me) are linked to gene repression. Methylation at Lys-10 (H3K9me) is a specific target for HP1 proteins (CBX1, CBX3 and CBX5) and prevents subsequent phosphorylation at Ser-11 (H3S10ph) and acetylation of H3 and H4. Methylation at Lys-5 (H3K4me) and Lys-80 (H3K79me) require preliminary monoubiquitination of H2B at 'Lys-120'. Methylation at Lys-10 (H3K9me) and Lys-28 (H3K27me) are enriched in inactive X chromosome chromatin. Monomethylation at Lys-57 (H3K56me1) by EHMT2/G9A in G1 phase promotes interaction with PCNA and is required for DNA replication. Phosphorylated at Thr-4 (H3T3ph) by HASPIN during prophase and dephosphorylated during anaphase. Phosphorylation at Ser-11 (H3S10ph) by AURKB is crucial for chromosome condensation and cell-cycle progression during mitosis and meiosis. In addition phosphorylation at Ser-11 (H3S10ph) by RPS6KA4 and RPS6KA5 is important during interphase because it enables the transcription of genes following external stimulation, like mitogens, stress, growth factors or UV irradiation and result in the activation of genes, such as c-fos and c-jun. Phosphorylation at Ser-11 (H3S10ph), which is linked to gene activation, prevents methylation at Lys-10 (H3K9me) but facilitates acetylation of H3 and H4. Phosphorylation at Ser-11 (H3S10ph) by AURKB mediates the dissociation of HP1 proteins (CBX1, CBX3 and CBX5) from heterochromatin. Phosphorylation at Ser-11 (H3S10ph) is also an essential regulatory mechanism for neoplastic cell transformation. Phosphorylated at Ser-29 (H3S28ph) by MAP3K20 isoform 1, RPS6KA5 or AURKB during mitosis or upon ultraviolet B irradiation. Phosphorylation at Thr-7 (H3T6ph) by PRKCB is a specific tag for epigenetic transcriptional activation that prevents demethylation of Lys-5 (H3K4me) by LSD1/KDM1A. At centromeres, specifically phosphorylated at Thr-12 (H3T11ph) from prophase to early anaphase, by DAPK3 and PKN1. Phosphorylation at Thr-12 (H3T11ph) by PKN1 or isoform M2 of PKM (PKM2) is a specific tag for epigenetic transcriptional activation that promotes demethylation of Lys-10 (H3K9me) by KDM4C/JMJD2C. Phosphorylation at Tyr-42 (H3Y41ph) by JAK2 promotes exclusion of CBX5 (HP1 alpha) from chromatin. In terms of processing, ubiquitinated. Post-translationally, lysine deamination at Lys-5 (H3K4all) to form allysine is mediated by LOXL2. Allysine formation by LOXL2 only takes place on H3K4me3 and results in gene repression. Butyrylation of histones marks active promoters and competes with histone acetylation. It is present during late spermatogenesis. In terms of processing, succinylation at Lys-80 (H3K79succ) by KAT2A takes place with a maximum frequency around the transcription start sites of genes. It gives a specific tag for epigenetic transcription activation. Desuccinylation at Lys-123 (H3K122succ) by SIRT7 in response to DNA damage promotes chromatin condensation and double-strand breaks (DSBs) repair. Post-translationally, serine ADP-ribosylation constitutes the primary form of ADP-ribosylation of proteins in response to DNA damage. Serine ADP-ribosylation at Ser-11 (H3S10ADPr) is mutually exclusive with phosphorylation at Ser-11 (H3S10ph) and impairs acetylation at Lys-10 (H3K9ac).

Its subcellular location is the nucleus. It is found in the chromosome. In terms of biological role, core component of nucleosome. Nucleosomes wrap and compact DNA into chromatin, limiting DNA accessibility to the cellular machineries which require DNA as a template. Histones thereby play a central role in transcription regulation, DNA repair, DNA replication and chromosomal stability. DNA accessibility is regulated via a complex set of post-translational modifications of histones, also called histone code, and nucleosome remodeling. The sequence is that of Histone H3-7 from Homo sapiens (Human).